The following is a 357-amino-acid chain: Alanine racemase, catabolic (357 aa).

K33 functions as the Proton acceptor; specific for D-alanine in the catalytic mechanism. Position 33 is an N6-(pyridoxal phosphate)lysine (K33). R129 lines the substrate pocket. Residue Y253 is the Proton acceptor; specific for L-alanine of the active site. M301 is a substrate binding site.

Belongs to the alanine racemase family. Requires pyridoxal 5'-phosphate as cofactor.

It catalyses the reaction L-alanine = D-alanine. It functions in the pathway amino-acid biosynthesis; D-alanine biosynthesis; D-alanine from L-alanine: step 1/1. Functionally, isomerizes L-alanine to D-alanine which is then likely oxidized to pyruvate by DadA. Shows racemase activity with both alanine stereoisomers, negligible activity with D-cysteine and L-serine, and exhibits no activity with the remaining natural chiral amino acids. The sequence is that of Alanine racemase, catabolic from Pseudomonas putida (strain ATCC 47054 / DSM 6125 / CFBP 8728 / NCIMB 11950 / KT2440).